The chain runs to 590 residues: MGQERPNDEERPESRDLGVYGCSPPHSPRLGPTRFYVFAGDPNPKQTIKRCKRKRIQACNDQRTAKTAIGVMAILGFFCLVNWFMLSRLHEGRVWLRRGLSENPKHVSAQNEERKKFEKQKMKYNGTYGRMLSLATDALAEGMRDNRYCNGFDFEQNKLETKDLWQEPKEQASAWKPCADQRSLTPDDGKNGYIMVTANGGINQQRVAVCNIVVVARLLNAALVIPKFMLSDVWTDASQFGDIYQEEHFMEYLSPDIRIVKELPKELQSLNLEEIGSVVTDIEVMKEAKPDFYMTHILPILLKNRVIHFVGFGNRLAFDPLPFELQRLRCRCNFHALNFVPRIQETAALLVKRLRGSGSYYLALHLRFEIDMVAHSLCYFGGGETEQKELDSYRQKHFPSLSTLTRKKKFRSADVLRTEGLCPLTPEEAVLMLAALGFNRETRVFVAGANIYGGSKRLAVLTSLYPNLVTKEKLLTESELQPFKNFSSQLAALDFIACAAADAFAMTDSGSQLSSLVSGYRIYYGGGKLPTIRPNKRRLSDILLKNSTIEWNVFEKRVRKAIRQTKHVFARPNGRSVYRYPRCKECMCHA.

Over residues Met1–Asp16 the composition is skewed to basic and acidic residues. The disordered stretch occupies residues Met1–His26. A helical; Signal-anchor for type II membrane protein transmembrane segment spans residues Thr67–Ser87. Asn125 is a glycosylation site (N-linked (GlcNAc...) asparagine). Residue His365–Arg367 participates in substrate binding. N-linked (GlcNAc...) asparagine glycans are attached at residues Asn485 and Asn546.

Belongs to the glycosyltransferase GT106 family.

It localises to the membrane. It functions in the pathway glycan metabolism. This Arabidopsis thaliana (Mouse-ear cress) protein is O-fucosyltransferase 2.